Reading from the N-terminus, the 115-residue chain is Large ribosomal subunit protein bL19 (115 aa).

It belongs to the bacterial ribosomal protein bL19 family.

Its function is as follows. This protein is located at the 30S-50S ribosomal subunit interface and may play a role in the structure and function of the aminoacyl-tRNA binding site. This Lawsonia intracellularis (strain PHE/MN1-00) protein is Large ribosomal subunit protein bL19.